We begin with the raw amino-acid sequence, 140 residues long: Large ribosomal subunit protein uL16 (140 aa).

The protein belongs to the universal ribosomal protein uL16 family. Part of the 50S ribosomal subunit.

Its function is as follows. Binds 23S rRNA and is also seen to make contacts with the A and possibly P site tRNAs. This chain is Large ribosomal subunit protein uL16, found in Syntrophus aciditrophicus (strain SB).